Consider the following 241-residue polypeptide: Thymidylate kinase (241 aa).

17–24 (GGEGAGKT) provides a ligand contact to ATP.

It belongs to the thymidylate kinase family.

It carries out the reaction dTMP + ATP = dTDP + ADP. In terms of biological role, phosphorylation of dTMP to form dTDP in both de novo and salvage pathways of dTTP synthesis. The protein is Thymidylate kinase of Thermosynechococcus vestitus (strain NIES-2133 / IAM M-273 / BP-1).